A 423-amino-acid polypeptide reads, in one-letter code: Exodeoxyribonuclease 7 large subunit (423 aa).

Belongs to the XseA family. As to quaternary structure, heterooligomer composed of large and small subunits.

The protein localises to the cytoplasm. The enzyme catalyses Exonucleolytic cleavage in either 5'- to 3'- or 3'- to 5'-direction to yield nucleoside 5'-phosphates.. Bidirectionally degrades single-stranded DNA into large acid-insoluble oligonucleotides, which are then degraded further into small acid-soluble oligonucleotides. This is Exodeoxyribonuclease 7 large subunit from Natranaerobius thermophilus (strain ATCC BAA-1301 / DSM 18059 / JW/NM-WN-LF).